Consider the following 285-residue polypeptide: Diaminopimelate epimerase (285 aa).

Residues Asn14 and Asn67 each contribute to the substrate site. Cys76 (proton donor) is an active-site residue. Substrate-binding positions include 77–78 (GN), Asn166, Asn199, and 217–218 (ER). Cys226 serves as the catalytic Proton acceptor. 227 to 228 (GT) contacts substrate.

Belongs to the diaminopimelate epimerase family. As to quaternary structure, homodimer.

The protein resides in the cytoplasm. It catalyses the reaction (2S,6S)-2,6-diaminopimelate = meso-2,6-diaminopimelate. It functions in the pathway amino-acid biosynthesis; L-lysine biosynthesis via DAP pathway; DL-2,6-diaminopimelate from LL-2,6-diaminopimelate: step 1/1. Catalyzes the stereoinversion of LL-2,6-diaminopimelate (L,L-DAP) to meso-diaminopimelate (meso-DAP), a precursor of L-lysine and an essential component of the bacterial peptidoglycan. The sequence is that of Diaminopimelate epimerase from Bacillus licheniformis (strain ATCC 14580 / DSM 13 / JCM 2505 / CCUG 7422 / NBRC 12200 / NCIMB 9375 / NCTC 10341 / NRRL NRS-1264 / Gibson 46).